Consider the following 214-residue polypeptide: Pyridoxine/pyridoxamine 5'-phosphate oxidase (214 aa).

Substrate is bound by residues 8 to 11 and lysine 66; that span reads RINY. FMN contacts are provided by residues 61-66, 76-77, arginine 82, lysine 83, and glutamine 105; these read RIVLIK and FT. Substrate-binding residues include tyrosine 123, arginine 127, and serine 131. FMN-binding positions include 140–141 and tryptophan 184; that span reads QS. 190–192 is a binding site for substrate; that stretch reads RLH. Arginine 194 serves as a coordination point for FMN.

This sequence belongs to the pyridoxamine 5'-phosphate oxidase family. In terms of assembly, homodimer. FMN is required as a cofactor.

The enzyme catalyses pyridoxamine 5'-phosphate + O2 + H2O = pyridoxal 5'-phosphate + H2O2 + NH4(+). It carries out the reaction pyridoxine 5'-phosphate + O2 = pyridoxal 5'-phosphate + H2O2. It participates in cofactor metabolism; pyridoxal 5'-phosphate salvage; pyridoxal 5'-phosphate from pyridoxamine 5'-phosphate: step 1/1. It functions in the pathway cofactor metabolism; pyridoxal 5'-phosphate salvage; pyridoxal 5'-phosphate from pyridoxine 5'-phosphate: step 1/1. Catalyzes the oxidation of either pyridoxine 5'-phosphate (PNP) or pyridoxamine 5'-phosphate (PMP) into pyridoxal 5'-phosphate (PLP). This is Pyridoxine/pyridoxamine 5'-phosphate oxidase from Burkholderia cenocepacia (strain HI2424).